The sequence spans 159 residues: Small ribosomal subunit protein uS17 (159 aa).

The protein belongs to the universal ribosomal protein uS17 family.

The sequence is that of Small ribosomal subunit protein uS17 (RPS11) from Euphorbia esula (Leafy spurge).